A 250-amino-acid chain; its full sequence is MIILITNDDGFGSEGIKLLKEVARNFASEIWIVAPDTDRSGAARSLDYPVKQSIGIKQHSEREFSVSGTPADCVIIALNKVMNKKPDLILSGVNIGSNVGDDICYSGTIGAVMEGAARSIPSIALSQVYHDKIDWHNTKVFAPKVIAKLVKVGWPKNIVMSVNFPAKEKVKGVEFAEQGEYNIDGDLTFTENSNGSFSLNWSREHSGSGSINKIKEGFITITPVKLDFTDYDTLNTMKNSCADEFSSIAD.

4 residues coordinate a divalent metal cation: Asp-8, Asp-9, Ser-40, and Asn-94.

It belongs to the SurE nucleotidase family. Requires a divalent metal cation as cofactor.

It is found in the cytoplasm. It catalyses the reaction a ribonucleoside 5'-phosphate + H2O = a ribonucleoside + phosphate. Nucleotidase that shows phosphatase activity on nucleoside 5'-monophosphates. This chain is 5'-nucleotidase SurE, found in Wolbachia pipientis wMel.